Reading from the N-terminus, the 426-residue chain is Proline--tRNA ligase (426 aa).

It belongs to the class-II aminoacyl-tRNA synthetase family. ProS type 2 subfamily. Homodimer.

The protein localises to the cytoplasm. It carries out the reaction tRNA(Pro) + L-proline + ATP = L-prolyl-tRNA(Pro) + AMP + diphosphate. Functionally, catalyzes the attachment of proline to tRNA(Pro) in a two-step reaction: proline is first activated by ATP to form Pro-AMP and then transferred to the acceptor end of tRNA(Pro). The protein is Proline--tRNA ligase of Rickettsia rickettsii (strain Iowa).